Here is a 174-residue protein sequence, read N- to C-terminus: MSKEEVLLNEEIDFKEVRCVSDNGEVYGIISSKEALNLAHKAGLDLVLISPNAKPPVCKIMDYGKFRYQAEKKQKEARKKQKQIEIKEIKLSTQIAQNDINYKVKHAIEFLESGKHVKFKVFLKQRELNIPDAGMDTLGKVAVMLEDIAIAEKEPKLEGKHLNVLYVPKKKEKH.

The protein belongs to the IF-3 family. Monomer.

Its subcellular location is the cytoplasm. In terms of biological role, IF-3 binds to the 30S ribosomal subunit and shifts the equilibrium between 70S ribosomes and their 50S and 30S subunits in favor of the free subunits, thus enhancing the availability of 30S subunits on which protein synthesis initiation begins. This Helicobacter hepaticus (strain ATCC 51449 / 3B1) protein is Translation initiation factor IF-3.